The chain runs to 232 residues: RNA chaperone ProQ (232 aa).

The segment at 105 to 182 (EAKARVQAQR…REEQHTPVSD (78 aa)) is disordered. Over residues 117–136 (QQAKKREAAAAAGEKEDAPR) the composition is skewed to basic and acidic residues. The span at 137-146 (RERKPRPTTP) shows a compositional bias: basic residues. Over residues 147-177 (RRKEGAERKPRAQKPVEKAPKTAKAPREEQH) the composition is skewed to basic and acidic residues.

It belongs to the ProQ family.

Its subcellular location is the cytoplasm. Its function is as follows. RNA chaperone with significant RNA binding, RNA strand exchange and RNA duplexing activities. May regulate ProP activity through an RNA-based, post-transcriptional mechanism. The protein is RNA chaperone ProQ of Shigella dysenteriae serotype 1 (strain Sd197).